Reading from the N-terminus, the 295-residue chain is Non-selective voltage-gated ion channel VDAC2 (295 aa).

Lys-24 and Lys-32 together coordinate ATP. N6-acetyllysine; alternate is present on Lys-32. Lys-32 is modified (N6-succinyllysine; alternate). Residue Lys-32 forms a Glycyl lysine isopeptide (Lys-Gly) (interchain with G-Cter in ubiquitin); alternate linkage. Transmembrane regions (beta stranded) follow at residues Leu-38–Ser-47 and Val-51–Ser-59. Residues Lys-65 and Lys-73 each participate in a glycyl lysine isopeptide (Lys-Gly) (interchain with G-Cter in ubiquitin) cross-link. The next 4 membrane-spanning stretches (beta stranded) occupy residues Val-66–Trp-76, Leu-81–Asn-88, Thr-92–Asp-101, and Leu-107–Ser-116. Lys-121 carries the N6-acetyllysine; alternate modification. A Glycyl lysine isopeptide (Lys-Gly) (interchain with G-Cter in ubiquitin); alternate cross-link involves residue Lys-121. Glycyl lysine isopeptide (Lys-Gly) (interchain with G-Cter in ubiquitin) cross-links involve residues Lys-122 and Lys-125. Beta stranded transmembrane passes span Ser-123–Arg-132, Ile-135–Asp-142, Ala-149–Gly-157, and Leu-162–Asp-170. Lys-173 is covalently cross-linked (Glycyl lysine isopeptide (Lys-Gly) (interchain with G-Cter in ubiquitin)). 6 beta stranded membrane-spanning segments follow: residues Lys-175–Thr-187, Phe-190–Asn-197, Glu-201–Val-210, Phe-214–Thr-223, Arg-230–Leu-239, and Ala-243–Asn-250. Phosphoserine is present on Ser-205. Ser-252 bears the Phosphoserine mark. Residues Leu-254–Gly-256 and Ser-272–Asp-276 contribute to the NAD(+) site. 2 beta stranded membrane-spanning segments follow: residues Leu-254–Leu-263 and Gly-266–Val-275. Lys-278 is modified (N6-acetyllysine; alternate). Residue Lys-278 forms a Glycyl lysine isopeptide (Lys-Gly) (interchain with G-Cter in ubiquitin); alternate linkage. Residues His-285–Glu-294 form a beta stranded membrane-spanning segment. Lys-286 is covalently cross-linked (Glycyl lysine isopeptide (Lys-Gly) (interchain with G-Cter in ubiquitin)).

This sequence belongs to the eukaryotic mitochondrial porin family. As to quaternary structure, monomer, homodimer and higher order oligomers; formation of higher order structures is necessary for scramblase activity. Interacts with ARMC12 in a TBC1D21-dependent manner. Interacts with KLC3. Interacts with SPATA33. Interacts with PPP3CC in a SPATA33-dependent manner. Ubiquitinated by PRKN during mitophagy, leading to its degradation and enhancement of mitophagy. Deubiquitinated by USP30.

The protein resides in the mitochondrion outer membrane. Its subcellular location is the membrane. It carries out the reaction chloride(in) = chloride(out). The enzyme catalyses K(+)(in) = K(+)(out). It catalyses the reaction a 1,2-diacyl-sn-glycero-3-phospho-L-serine(in) = a 1,2-diacyl-sn-glycero-3-phospho-L-serine(out). The catalysed reaction is a 1,2-diacyl-sn-glycero-3-phosphocholine(in) = a 1,2-diacyl-sn-glycero-3-phosphocholine(out). It carries out the reaction a 1,2-diacyl-sn-glycero-3-phospho-(1D-myo-inositol)(in) = a 1,2-diacyl-sn-glycero-3-phospho-(1D-myo-inositol)(out). In terms of biological role, non-selective voltage-gated ion channel that mediates the transport of anions and cations through the mitochondrion outer membrane and plasma membrane. The channel adopts an open conformation at zero mV and a closed conformation at both positive and negative potentials. There are two populations of channels; the main that functions in a lower open-state conductance with lower ion selectivity, that switch, in a voltage-dependent manner, from the open to a low-conducting 'closed' state and the other that has a normal ion selectivity in the typical high conductance, 'open' state. Binds various lipids, including the sphingolipid ceramide, the phospholipid phosphatidylcholine, and the sterols cholesterol and oxysterol. Binding of ceramide promotes the mitochondrial outer membrane permeabilization (MOMP) apoptotic pathway. Its function is as follows. Catalyzes the scrambling of phospholipids across the outer mitochondrial membrane; the mechanism is unrelated to channel activity and is capable of translocating both anionic and zwitterionic phospholipids. This chain is Non-selective voltage-gated ion channel VDAC2, found in Mesocricetus auratus (Golden hamster).